We begin with the raw amino-acid sequence, 503 residues long: Na(+)-translocating NADH-quinone reductase subunit B (503 aa).

5 helical membrane passes run 55–75 (MMLV…NSGL), 94–114 (ISGF…VPIL), 120–140 (IFIP…VLFA), 161–181 (TLPP…GIVV), and 186–206 (FGGT…FLFF). Thr248 carries the post-translational modification FMN phosphoryl threonine. Helical transmembrane passes span 361–381 (TSTF…IASW), 386–406 (AFGI…VLIV), 417–437 (FFIP…LVFM), 452–472 (WIYG…NPAY), and 475–495 (GVML…YFAV).

Belongs to the NqrB/RnfD family. Composed of six subunits; NqrA, NqrB, NqrC, NqrD, NqrE and NqrF. FMN serves as cofactor.

It localises to the cell inner membrane. The catalysed reaction is a ubiquinone + n Na(+)(in) + NADH + H(+) = a ubiquinol + n Na(+)(out) + NAD(+). Its function is as follows. NQR complex catalyzes the reduction of ubiquinone-1 to ubiquinol by two successive reactions, coupled with the transport of Na(+) ions from the cytoplasm to the periplasm. NqrA to NqrE are probably involved in the second step, the conversion of ubisemiquinone to ubiquinol. The polypeptide is Na(+)-translocating NADH-quinone reductase subunit B (Chlamydia pneumoniae (Chlamydophila pneumoniae)).